We begin with the raw amino-acid sequence, 292 residues long: ATP synthase gamma chain (292 aa).

It belongs to the ATPase gamma chain family. As to quaternary structure, F-type ATPases have 2 components, CF(1) - the catalytic core - and CF(0) - the membrane proton channel. CF(1) has five subunits: alpha(3), beta(3), gamma(1), delta(1), epsilon(1). CF(0) has three main subunits: a, b and c.

Its subcellular location is the cell inner membrane. Its function is as follows. Produces ATP from ADP in the presence of a proton gradient across the membrane. The gamma chain is believed to be important in regulating ATPase activity and the flow of protons through the CF(0) complex. The protein is ATP synthase gamma chain of Chlorobaculum parvum (strain DSM 263 / NCIMB 8327) (Chlorobium vibrioforme subsp. thiosulfatophilum).